The sequence spans 337 residues: Hairy/enhancer-of-split related with YRPW motif protein 2 (337 aa).

Positions 1-52 (MKRPCEETTSESDMDETIDVGSENNYSGQSTSSVIRLNSPTTTSQIMARKKR) are disordered. Acidic residues predominate over residues 8–18 (TTSESDMDETI). The span at 22 to 46 (SENNYSGQSTSSVIRLNSPTTTSQI) shows a compositional bias: polar residues. The transcriptional repression and interaction with NCOR1 and SIN3A stretch occupies residues 47 to 116 (MARKKRRGII…GGKGYFDAHA (70 aa)). Positions 48–103 (ARKKRRGIIEKRRRDRINNSLSELRRLVPTAFEKQGSAKLEKAEILQMTVDHLKML) constitute a bHLH domain. The Orange domain maps to 122 to 157 (MSIGFRECLTEVARYLSSVEGLDSSDPLRVRLVSHL). Over residues 307 to 325 (LSVSATSSPQQTSSGTNNK) the composition is skewed to polar residues. Positions 307 to 337 (LSVSATSSPQQTSSGTNNKPYRPWGTEVGAF) are disordered. A YRPW motif motif is present at residues 327 to 330 (YRPW).

It belongs to the HEY family. In terms of assembly, may self-associate. Interacts with GATA4, HES1 and HEYL. Interacts with HDAC1, NCOR1 and SIN3A. Interacts with ARNT and GATA6.

The protein resides in the nucleus. In terms of biological role, downstream effector of Notch signaling which may be required for cardiovascular development. Transcriptional repressor which binds preferentially to the canonical E box sequence 5'-CACGTG-3'. Represses transcription by the cardiac transcriptional activators GATA4 and GATA6. This Homo sapiens (Human) protein is Hairy/enhancer-of-split related with YRPW motif protein 2 (HEY2).